Consider the following 69-residue polypeptide: Sperm protamine P1 (69 aa).

The segment at 1–69 (MARYRHSRSR…YSRRRRRRYY (69 aa)) is disordered.

The protein belongs to the protamine P1 family. Testis.

The protein localises to the nucleus. It is found in the chromosome. Functionally, protamines substitute for histones in the chromatin of sperm during the haploid phase of spermatogenesis. They compact sperm DNA into a highly condensed, stable and inactive complex. This Pseudochirops cupreus (Coppery ringtail) protein is Sperm protamine P1 (PRM1).